We begin with the raw amino-acid sequence, 113 residues long: Putative increased recombination centers protein 14 (113 aa).

In Saccharomyces cerevisiae (strain ATCC 204508 / S288c) (Baker's yeast), this protein is Putative increased recombination centers protein 14 (IRC14).